Here is a 404-residue protein sequence, read N- to C-terminus: Argininosuccinate synthase (404 aa).

9 to 17 (AYSGGLDTS) is a binding site for ATP. Y86 serves as a coordination point for L-citrulline. Position 116 (G116) interacts with ATP. T118, N122, and D123 together coordinate L-aspartate. Residue N122 coordinates L-citrulline. Residues R126, S174, S183, E259, and Y271 each coordinate L-citrulline.

This sequence belongs to the argininosuccinate synthase family. Type 1 subfamily. As to quaternary structure, homotetramer.

The protein localises to the cytoplasm. The catalysed reaction is L-citrulline + L-aspartate + ATP = 2-(N(omega)-L-arginino)succinate + AMP + diphosphate + H(+). It participates in amino-acid biosynthesis; L-arginine biosynthesis; L-arginine from L-ornithine and carbamoyl phosphate: step 2/3. The protein is Argininosuccinate synthase of Listeria welshimeri serovar 6b (strain ATCC 35897 / DSM 20650 / CCUG 15529 / CIP 8149 / NCTC 11857 / SLCC 5334 / V8).